Here is a 33-residue protein sequence, read N- to C-terminus: Gastrin (33 aa).

A pyrrolidone carboxylic acid mark is found at Gln-1 and Gln-18. Tyr-28 bears the Sulfotyrosine mark. Phe-33 carries the post-translational modification Phenylalanine amide.

The protein belongs to the gastrin/cholecystokinin family.

It localises to the secreted. Its function is as follows. Gastrin stimulates the stomach mucosa to produce and secrete hydrochloric acid and the pancreas to secrete its digestive enzymes. It also stimulates smooth muscle contraction and increases blood circulation and water secretion in the stomach and intestine. This is Gastrin (GAST) from Didelphis virginiana (North American opossum).